Here is a 330-residue protein sequence, read N- to C-terminus: UPF0353 protein MAP_3434 (330 aa).

Transmembrane regions (helical) follow at residues 21–41 and 63–83; these read GMLLFGLVPLALLALYLVVQA and LPIAVSLLSLVLLTIALATPT. Residues 94-289 enclose the VWFA domain; that stretch reads VIMLVIDMSQ…GELQKSYNAI (196 aa). Residues 304–324 form a helical membrane-spanning segment; that stretch reads AGWLRLGVLTALIATALALLI.

It belongs to the UPF0353 family.

It is found in the cell membrane. This Mycolicibacterium paratuberculosis (strain ATCC BAA-968 / K-10) (Mycobacterium paratuberculosis) protein is UPF0353 protein MAP_3434.